We begin with the raw amino-acid sequence, 623 residues long: DNA mismatch repair protein MutL (623 aa).

Positions 353-368 (AQQSAPRPANSYSPAS) are enriched in polar residues. A disordered region spans residues 353–389 (AQQSAPRPANSYSPASWRTAPPAPRSEWSPQTAHPAH).

This sequence belongs to the DNA mismatch repair MutL/HexB family.

Its function is as follows. This protein is involved in the repair of mismatches in DNA. It is required for dam-dependent methyl-directed DNA mismatch repair. May act as a 'molecular matchmaker', a protein that promotes the formation of a stable complex between two or more DNA-binding proteins in an ATP-dependent manner without itself being part of a final effector complex. The chain is DNA mismatch repair protein MutL from Brucella melitensis biotype 1 (strain ATCC 23456 / CCUG 17765 / NCTC 10094 / 16M).